We begin with the raw amino-acid sequence, 230 residues long: 2,3-bisphosphoglycerate-dependent phosphoglycerate mutase (230 aa).

Substrate is bound by residues 8-15 (RHGESEWN), 21-22 (TG), arginine 60, 87-90 (ERHY), lysine 98, 114-115 (RR), and 183-184 (GN). The Tele-phosphohistidine intermediate role is filled by histidine 9. Catalysis depends on glutamate 87, which acts as the Proton donor/acceptor.

It belongs to the phosphoglycerate mutase family. BPG-dependent PGAM subfamily.

It catalyses the reaction (2R)-2-phosphoglycerate = (2R)-3-phosphoglycerate. Its pathway is carbohydrate degradation; glycolysis; pyruvate from D-glyceraldehyde 3-phosphate: step 3/5. Catalyzes the interconversion of 2-phosphoglycerate and 3-phosphoglycerate. The chain is 2,3-bisphosphoglycerate-dependent phosphoglycerate mutase from Streptococcus uberis (strain ATCC BAA-854 / 0140J).